The following is a 524-amino-acid chain: 12S seed storage protein CRC (524 aa).

The signal sequence occupies residues 1–23 (MVKLSNLLVATFGVLLVLNGCLA). A disulfide bridge connects residues Cys37 and Cys70. Cupin type-1 domains follow at residues 42 to 289 (LDVL…QLAQ) and 346 to 495 (ENID…EEAR). Ser53 carries the post-translational modification Phosphoserine. Position 78 is a phosphotyrosine (Tyr78). Residue Ser97 is modified to Phosphoserine. Cys113 and Cys340 are oxidised to a cystine. The residue at position 116 (Thr116) is a Phosphothreonine. Residues 119-190 (DSQPMQGQQQ…QGQQGQQGFR (72 aa)) are disordered. The segment covering 124-188 (QGQQQGQPWQ…EGQGQQGQQG (65 aa)) has biased composition (low complexity). Ser259 and Ser366 each carry phosphoserine. Thr459 is subject to Phosphothreonine. The residue at position 484 (Ser484) is a Phosphoserine. Thr501 carries the post-translational modification Phosphothreonine.

The protein belongs to the 11S seed storage protein (globulins) family. As to quaternary structure, hexamer; each subunit is composed of an acidic and a basic chain derived from a single precursor and linked by a disulfide bond. Proteolytically processed during seed maturation at a conserved Asn-Gly peptide bond by an asparaginyl endopeptidase to produce two mature polypeptides referred to as alpha and beta subunits that are joined together by a disulfide bond. In terms of processing, phosphorylated in seeds on some Tyr residues in response to abscisic acid (ABA). Accumulates in seeds 8 days after anthesis.

It localises to the protein storage vacuole. Functionally, seed storage protein. The protein is 12S seed storage protein CRC (CRC) of Arabidopsis thaliana (Mouse-ear cress).